A 218-amino-acid polypeptide reads, in one-letter code: Cell division protein SepF (218 aa).

The tract at residues 20-81 (DDEYYDDRAP…GYRGGYADEP (62 aa)) is disordered. Residues 36 to 65 (PRFDDDYGRYDGRDYDDARSDSRGDLRGEP) show a composition bias toward basic and acidic residues.

The protein belongs to the SepF family. In terms of assembly, homodimer. Interacts with FtsZ.

Its subcellular location is the cytoplasm. In terms of biological role, cell division protein that is part of the divisome complex and is recruited early to the Z-ring. Probably stimulates Z-ring formation, perhaps through the cross-linking of FtsZ protofilaments. Its function overlaps with FtsA. This is Cell division protein SepF from Mycobacterium bovis (strain ATCC BAA-935 / AF2122/97).